The primary structure comprises 124 residues: Small ribosomal subunit protein uS10 (124 aa).

Belongs to the universal ribosomal protein uS10 family.

The polypeptide is Small ribosomal subunit protein uS10 (rps20) (Dictyostelium discoideum (Social amoeba)).